We begin with the raw amino-acid sequence, 240 residues long: Transcription factor bHLH101 (240 aa).

One can recognise a bHLH domain in the interval 65-117; the sequence is EKKLNHNASERDRRRKLNALYSSLRALLPLSDQKRKLSIPMTVARVVKYIPEQ.

As to quaternary structure, homodimer. In terms of tissue distribution, flowers.

The protein resides in the nucleus. This chain is Transcription factor bHLH101 (BHLH101), found in Arabidopsis thaliana (Mouse-ear cress).